The primary structure comprises 364 residues: Autophagy-related protein 14 (364 aa).

A cysteine repeats region spans residues 5–20 (CPICETQSHVFYCAHC). Residues 38–114 (LGKINNALRN…QDRRIKEKSR (77 aa)) adopt a coiled-coil conformation.

It belongs to the ATG14 family. As to quaternary structure, component of the autophagy-specific VPS34 PI3-kinase complex I composed of VPS15, VPS30, VPS34, ATG14 and ATG38. Interacts directly with ATG38.

It localises to the preautophagosomal structure membrane. It is found in the vacuole membrane. Its function is as follows. Required for cytoplasm to vacuole transport (Cvt) and autophagy as a part of the autophagy-specific VPS34 PI3-kinase complex I. This complex is essential to recruit the ATG8-phosphatidylinositol conjugate and the ATG12-ATG5 conjugate to the pre-autophagosomal structure. ATG14 mediates the specific binding of the VPS34 PI3-kinase complex I to the preautophagosomal structure (PAS). Required for survival and/or proliferation in kidneys and in brain. This is Autophagy-related protein 14 from Candida glabrata (strain ATCC 2001 / BCRC 20586 / JCM 3761 / NBRC 0622 / NRRL Y-65 / CBS 138) (Yeast).